The following is a 123-amino-acid chain: Small ribosomal subunit protein uS12 (123 aa).

The residue at position 89 (D89) is a 3-methylthioaspartic acid.

The protein belongs to the universal ribosomal protein uS12 family. In terms of assembly, part of the 30S ribosomal subunit. Contacts proteins S8 and S17. May interact with IF1 in the 30S initiation complex.

With S4 and S5 plays an important role in translational accuracy. Its function is as follows. Interacts with and stabilizes bases of the 16S rRNA that are involved in tRNA selection in the A site and with the mRNA backbone. Located at the interface of the 30S and 50S subunits, it traverses the body of the 30S subunit contacting proteins on the other side and probably holding the rRNA structure together. The combined cluster of proteins S8, S12 and S17 appears to hold together the shoulder and platform of the 30S subunit. This is Small ribosomal subunit protein uS12 from Phenylobacterium zucineum (strain HLK1).